The sequence spans 113 residues: MGSPCALGLFCCCSSCFCLCCPRHRPASRLAAVVGGATAVPAVVSGVTGLILSPSPSPIFIQPTPSLPMSFHNPGLELALDSRPAPLAPLGVTSPSAPPLPPVVDLPQLGLRR.

Hydrophobic stretches follow at residues 1–21 and 32–52; these read MGSPCALGLFCCCSSCFCLCC and AVVGGATAVPAVVSGVTGLIL. Positions 27–67 are interaction with host HPX; that stretch reads ASRLAAVVGGATAVPAVVSGVTGLILSPSPSPIFIQPTPSL. The interaction with the capsid protein stretch occupies residues 47 to 71; the sequence is VTGLILSPSPSPIFIQPTPSLPMSF. Ser70 bears the Phosphoserine; by host mark. The tract at residues 71–113 is homodimerization, and interaction with host AMBP/bikunin; sequence FHNPGLELALDSRPAPLAPLGVTSPSAPPLPPVVDLPQLGLRR. Residues 89-113 are disordered; the sequence is PLGVTSPSAPPLPPVVDLPQLGLRR. The segment at 94 to 103 is interaction with host SRC, HCK, FYN, PIK3R3 and GRB2; the sequence is SPSAPPLPPV. A PTAP/PSAP motif motif is present at residues 95-98; that stretch reads PSAP.

It belongs to the hepevirus ORF3 protein family. In terms of assembly, forms homooligomers. Interacts with host SRC, HCK, FYN, PIK3R3 and GRB2 (via SH3 domain); binding does not activate the kinases. Interacts with host AMBP/bikunin and AMBP/alpha-1-microglobulin peptides. Interacts with host HPX/hemopexin. Interacts (when phosphorylated) with capsid protein ORF2. Interacts with host TSG101; this interaction plays a role in viral release from the host cell. Interacts with host SIRPA; this interaction down-regulates the phosphorylation of host IRF3. Post-translationally, palmitoylated in the N-terminus.

Its subcellular location is the host endoplasmic reticulum membrane. The protein localises to the host cytoplasm. The protein resides in the host cytoskeleton. It localises to the virion. It is found in the host cell membrane. In terms of biological role, small multifunctional phosphoprotein involved in virion morphogenesis, egress and counteracting host innate immunity. Plays critical roles in the final steps of viral release by interacting with host TSG101, a member of the vacuolar protein-sorting pathway and using other cellular host proteins involved in vesicle formation pathway. Also acts as a viroporin and forms ion conductive pores allowing viral particle release. Impairs the generation of type I interferon by down-regulating host TLR3 and TLR7 as well as their downstream signaling pathways. Down-regulates the phosphorylation of host IRF3 via the interaction with host SIRP-alpha, thereby inhibiting IFN-I expression. Interacts with host microtubules. This Bandicota bengalensis (lesser bandicoot rat) protein is Protein ORF3.